The primary structure comprises 467 residues: Chromosomal replication initiator protein DnaA (467 aa).

Residues 1–90 (MSLSLWQQCL…KPVTQTPQAA (90 aa)) form a domain I, interacts with DnaA modulators region. Residues 91 to 130 (VTSNVAAPAQVAQTQPQRAAPSMRSGWDNVPAPAEPTYRS) are domain II. The tract at residues 131 to 347 (NVNVKHTFDN…GALNRVIANA (217 aa)) is domain III, AAA+ region. ATP contacts are provided by glycine 175, glycine 177, lysine 178, and threonine 179. The domain IV, binds dsDNA stretch occupies residues 348–467 (NFTGRAITID…FSNLIRTLSS (120 aa)).

This sequence belongs to the DnaA family. As to quaternary structure, oligomerizes as a right-handed, spiral filament on DNA at oriC.

The protein resides in the cytoplasm. In terms of biological role, plays an essential role in the initiation and regulation of chromosomal replication. ATP-DnaA binds to the origin of replication (oriC) to initiate formation of the DNA replication initiation complex once per cell cycle. Binds the DnaA box (a 9 base pair repeat at the origin) and separates the double-stranded (ds)DNA. Forms a right-handed helical filament on oriC DNA; dsDNA binds to the exterior of the filament while single-stranded (ss)DNA is stabiized in the filament's interior. The ATP-DnaA-oriC complex binds and stabilizes one strand of the AT-rich DNA unwinding element (DUE), permitting loading of DNA polymerase. After initiation quickly degrades to an ADP-DnaA complex that is not apt for DNA replication. Binds acidic phospholipids. The chain is Chromosomal replication initiator protein DnaA from Escherichia coli (strain ATCC 8739 / DSM 1576 / NBRC 3972 / NCIMB 8545 / WDCM 00012 / Crooks).